The primary structure comprises 42 residues: Delta-actitoxin-Ael2d (42 aa).

Intrachain disulfides connect Cys4–Cys37, Cys6–Cys30, and Cys20–Cys38.

Belongs to the sea anemone type 3 (BDS) potassium channel toxin family.

It localises to the secreted. It is found in the nematocyst. Its function is as follows. Binds to voltage-gated sodium channels (Nav), and slows down the inactivation of mammalian Nav1.2/SCN2A, Nav1.3/SCN3A Nav1.4/SCN4A, Nav1.6/SCN8A, insect DmNav1 and BgNav1 channels, and arachnid VdNav1 channel. This toxin acts by binding to site 3 of sodium channels. In Anthopleura elegantissima (Green aggregating anemone), this protein is Delta-actitoxin-Ael2d.